We begin with the raw amino-acid sequence, 205 residues long: Putative 3-methyladenine DNA glycosylase (205 aa).

This sequence belongs to the DNA glycosylase MPG family.

The chain is Putative 3-methyladenine DNA glycosylase from Bacillus cereus (strain Q1).